Consider the following 56-residue polypeptide: Large ribosomal subunit protein bL33 (56 aa).

This sequence belongs to the bacterial ribosomal protein bL33 family.

In Treponema denticola (strain ATCC 35405 / DSM 14222 / CIP 103919 / JCM 8153 / KCTC 15104), this protein is Large ribosomal subunit protein bL33.